Here is a 551-residue protein sequence, read N- to C-terminus: Cytochrome c oxidase subunit 1 homolog (551 aa).

3 helical membrane-spanning segments follow: residues 14–34, 40–60, and 88–108; these read GELGLILVFAALGFFSIVVAA, EYAFHAYLFAAASIATVFVIG, and VGTLLAVFWGIAGFLIGVIIA. H132 contacts heme b. The next 8 membrane-spanning stretches (helical) occupy residues 133–153, 169–189, 202–222, 229–249, 280–300, 313–333, 345–365, and 383–403; these read TSAVIFAFGGNVLIATSFYVV, FVVLGYNFFIVIAGTGYLLGI, ADLWLTIVWVTYFLVFLGTVL, IYVANWFYLAFILTIAVLHLG, GHNAVGFFLTAGFLALMYYFI, LSIVHFWALIFLYIWAGPHHL, LGMTFSIMLWMPSWGGMINGL, and MMVVAVAFYGMATFEGPMMSV. H281, H331, and H332 together coordinate Cu cation. H419 and H421 together coordinate heme b. The next 3 helical transmembrane spans lie at 424 to 444, 459 to 479, and 513 to 533; these read ALGWVAYISFGAIYCLIPWLW, FWVSTLGIVLYICAMWVAGIL, and IGGILFLAGSLIMAWNVFMTI.

This sequence belongs to the heme-copper respiratory oxidase family. The cofactor is Cu(2+). Heme b is required as a cofactor.

It is found in the cell membrane. The enzyme catalyses 4 Fe(II)-[cytochrome c] + O2 + 8 H(+)(in) = 4 Fe(III)-[cytochrome c] + 2 H2O + 4 H(+)(out). The protein operates within energy metabolism; oxidative phosphorylation. Cytochrome c oxidase is the component of the respiratory chain that catalyzes the reduction of oxygen to water. Subunits 1-3 form the functional core of the enzyme complex. Co I is the catalytic subunit of the enzyme. Electrons originating in cytochrome c or a quinol are transferred to the bimetallic center formed by a high-spin heme and copper B. This chain is Cytochrome c oxidase subunit 1 homolog (fixN), found in Azorhizobium caulinodans (strain ATCC 43989 / DSM 5975 / JCM 20966 / LMG 6465 / NBRC 14845 / NCIMB 13405 / ORS 571).